We begin with the raw amino-acid sequence, 216 residues long: Co-chaperone protein SBA1 (216 aa).

Serine 2 is subject to N-acetylserine. One can recognise a CS domain in the interval 5–108 (VINPQVAWAQ…LESEYWPRLT (104 aa)). Repeats lie at residues 141-156 (AQGM…AGGA) and 160-174 (GGMD…AGGA). Residues 169–216 (GGAGGAGSPDMAQLQQLLAQSGGNLDMGDFKENDEEDEEEEIEPEVKA) are disordered. The span at 200–216 (ENDEEDEEEEIEPEVKA) shows a compositional bias: acidic residues.

This sequence belongs to the p23/wos2 family. Interacts with HSP82.

Its function is as follows. Acts as a co-chaperone. In Saccharomyces cerevisiae (strain ATCC 204508 / S288c) (Baker's yeast), this protein is Co-chaperone protein SBA1 (SBA1).